The following is a 36-amino-acid chain: Photosystem II reaction center protein M (36 aa).

A helical membrane pass occupies residues 5-25 (ILGVIAVALFILIPTSFLLIL).

It belongs to the PsbM family. As to quaternary structure, PSII is composed of 1 copy each of membrane proteins PsbA, PsbB, PsbC, PsbD, PsbE, PsbF, PsbH, PsbI, PsbJ, PsbK, PsbL, PsbM, PsbT, PsbY, PsbZ, Psb30/Ycf12, at least 3 peripheral proteins of the oxygen-evolving complex and a large number of cofactors. It forms dimeric complexes.

Its subcellular location is the plastid. The protein resides in the chloroplast thylakoid membrane. In terms of biological role, one of the components of the core complex of photosystem II (PSII). PSII is a light-driven water:plastoquinone oxidoreductase that uses light energy to abstract electrons from H(2)O, generating O(2) and a proton gradient subsequently used for ATP formation. It consists of a core antenna complex that captures photons, and an electron transfer chain that converts photonic excitation into a charge separation. This subunit is found at the monomer-monomer interface. The sequence is that of Photosystem II reaction center protein M from Bigelowiella natans (Pedinomonas minutissima).